The chain runs to 320 residues: Coproporphyrin III ferrochelatase (320 aa).

2 residues coordinate Fe(2+): histidine 194 and glutamate 273.

The protein belongs to the ferrochelatase family.

The protein resides in the cytoplasm. It catalyses the reaction Fe-coproporphyrin III + 2 H(+) = coproporphyrin III + Fe(2+). Its pathway is porphyrin-containing compound metabolism; protoheme biosynthesis. In terms of biological role, involved in coproporphyrin-dependent heme b biosynthesis. Catalyzes the insertion of ferrous iron into coproporphyrin III to form Fe-coproporphyrin III. This Symbiobacterium thermophilum (strain DSM 24528 / JCM 14929 / IAM 14863 / T) protein is Coproporphyrin III ferrochelatase.